The primary structure comprises 237 residues: E3 ubiquitin-protein ligase RNF166 (237 aa).

The RING-type zinc-finger motif lies at 33-73; it reads CPICLEVYHRPVAIGSCGHTFCGECLQPCLQVPSPLCPLCR. Zn(2+) contacts are provided by Cys98, Cys101, His113, and Cys117. The C2HC RNF-type zinc-finger motif lies at 98–117; sequence CRGCNKKVTLAKMRVHISSC. The UIM domain occupies 221-237; that stretch reads DEEAAFQAALALSLSEN.

The protein localises to the cytoplasm. It carries out the reaction S-ubiquitinyl-[E2 ubiquitin-conjugating enzyme]-L-cysteine + [acceptor protein]-L-lysine = [E2 ubiquitin-conjugating enzyme]-L-cysteine + N(6)-ubiquitinyl-[acceptor protein]-L-lysine.. It participates in protein modification; protein ubiquitination. Functionally, E3 ubiquitin-protein ligase that promotes the ubiquitination of different substrates. In turn, participates in different biological processes including interferon production or autophagy. Plays a role in the activation of RNA virus-induced interferon-beta production by promoting the ubiquitination of TRAF3 and TRAF6. Also plays a role in the early recruitment of autophagy adapters to bacteria. Mediates 'Lys-29' and 'Lys-33'-linked ubiquitination of SQSTM1 leading to xenophagic targeting of bacteria and inhibition of their replication. The polypeptide is E3 ubiquitin-protein ligase RNF166 (RNF166) (Homo sapiens (Human)).